Reading from the N-terminus, the 297-residue chain is 4-hydroxybenzoate octaprenyltransferase (297 aa).

9 helical membrane passes run 29 to 49 (IGTY…AEGV), 55 to 75 (LFIF…VNDF), 102 to 122 (AWTL…LTNA), 124 to 141 (TVYL…YPFM), 146 to 166 (FYPQ…AFTA), 169 to 189 (GSLP…TVAY), 219 to 239 (VIIV…GVRF), 241 to 261 (LGQW…WEFW), and 270 to 290 (VCFK…AGIV).

This sequence belongs to the UbiA prenyltransferase family. Mg(2+) is required as a cofactor.

It is found in the cell inner membrane. The enzyme catalyses all-trans-octaprenyl diphosphate + 4-hydroxybenzoate = 4-hydroxy-3-(all-trans-octaprenyl)benzoate + diphosphate. It functions in the pathway cofactor biosynthesis; ubiquinone biosynthesis. Functionally, catalyzes the prenylation of para-hydroxybenzoate (PHB) with an all-trans polyprenyl group. Mediates the second step in the final reaction sequence of ubiquinone-8 (UQ-8) biosynthesis, which is the condensation of the polyisoprenoid side chain with PHB, generating the first membrane-bound Q intermediate 3-octaprenyl-4-hydroxybenzoate. The sequence is that of 4-hydroxybenzoate octaprenyltransferase from Stutzerimonas stutzeri (strain A1501) (Pseudomonas stutzeri).